A 281-amino-acid polypeptide reads, in one-letter code: Pantothenate synthetase (281 aa).

26-33 lines the ATP pocket; it reads MGSLHEGH. Histidine 33 acts as the Proton donor in catalysis. A (R)-pantoate-binding site is contributed by glutamine 57. A beta-alanine-binding site is contributed by glutamine 57. 144–147 is an ATP binding site; that stretch reads GKKD. (R)-pantoate is bound at residue glutamine 150. ATP-binding positions include alanine 173 and 181–184; that span reads LSSR.

Belongs to the pantothenate synthetase family. As to quaternary structure, homodimer.

The protein localises to the cytoplasm. It carries out the reaction (R)-pantoate + beta-alanine + ATP = (R)-pantothenate + AMP + diphosphate + H(+). Its pathway is cofactor biosynthesis; (R)-pantothenate biosynthesis; (R)-pantothenate from (R)-pantoate and beta-alanine: step 1/1. Catalyzes the condensation of pantoate with beta-alanine in an ATP-dependent reaction via a pantoyl-adenylate intermediate. This Methylibium petroleiphilum (strain ATCC BAA-1232 / LMG 22953 / PM1) protein is Pantothenate synthetase.